Here is a 273-residue protein sequence, read N- to C-terminus: Signal recognition particle subunit SEC65 (273 aa).

The interval 25 to 71 is disordered; that stretch reads PSLRTPIAPKITPKVVRSQDQENPAFLPGTNNNSNSNNNSSNEKEQL. The span at 55–65 shows a compositional bias: low complexity; that stretch reads NNNSNSNNNSS.

As to quaternary structure, fungal signal recognition particle (SRP) complex consists of a 7S RNA molecule (scR1) and at least six protein subunits: SRP72, SRP68, SRP54, SEC65, SRP21 and SRP14.

It localises to the cytoplasm. Its function is as follows. Signal-recognition-particle (SRP) assembly has a crucial role in targeting secretory proteins to the rough endoplasmic reticulum (ER) membrane. SRP is required for the cotranslational protein translocation for ER import and preferentially recognizes strongly hydrophobic signal sequences. It is involved in targeting the nascent chain-ribosome (RNC) complex to the ER and is proposed to participate in the arrest of nascent chain elongation during membrane targeting. SEC65 is required for SRP integrity. This is Signal recognition particle subunit SEC65 (SEC65) from Saccharomyces cerevisiae (strain ATCC 204508 / S288c) (Baker's yeast).